The sequence spans 535 residues: Calcium-dependent protein kinase 1 (535 aa).

The tract at residues 1–34 is disordered; it reads MGCNQSKSANDVRGNKVNNVNSKKKNNKREDIND. G2 is lipidated: N-myristoyl glycine. C3 carries S-palmitoyl cysteine lipidation. The Protein kinase domain occupies 57–324; it reads YFKVRKLGSG…AEEALNSRWI (268 aa). ATP-binding positions include 63-71 and K86; that span reads LGSGAYGEV. At S65 the chain carries Phosphoserine. A Phosphoserine modification is found at S117. D190 (proton acceptor) is an active-site residue. Phosphoserine occurs at positions 216 and 219. Position 230 is a phosphothreonine (T230). The residue at position 334 (S334) is a Phosphoserine. The short motif at 345-352 is the J domain autoinhibitory motif element; that stretch reads NMRKFEGS. The interval 345–363 is j domain; it reads NMRKFEGSQKLAQAAILFI. The short motif at 353-363 is the J domain interacts with the EF-hand domains element; the sequence is QKLAQAAILFI. 4 consecutive EF-hand domains span residues 371–406, 415–450, 451–486, and 497–532; these read EERK…LRNF, NVEE…KQIL, FSEE…GFYF, and VSEK…ICDN. 20 residues coordinate Ca(2+): D384, N386, D388, Q390, E395, D428, D430, N432, Y434, E439, D464, D466, S468, K470, E475, D510, N512, D514, M516, and E521.

The protein belongs to the protein kinase superfamily. Ser/Thr protein kinase family. CDPK subfamily. In terms of assembly, monomer. It depends on Mg(2+) as a cofactor. Post-translationally, myristoylated. Myristoylation and palmitoylation are required for the localization to the parasitophorous vacuole membrane. Palmitoylated. Palmitoylation increases in merozoites in response to low level of extracellular K(+) in the host blood. Myristoylation and palmitoylation are required for the localization to the parasitophorous vacuole membrane. In terms of processing, phosphorylation at Thr-230 may regulate CDPK1 kinase activity. Phosphorylation increases in response to an increase in intracellular Ca(2+) levels. Autophosphorylated in vitro. Autophosphorylation does not affect membrane localization in vitro.

It localises to the membrane. Its subcellular location is the cell membrane. The protein localises to the parasitophorous vacuole membrane. It is found in the cytoplasm. The protein resides in the cell projection. It localises to the cilium. Its subcellular location is the flagellum. The protein localises to the host cell membrane. It carries out the reaction L-seryl-[protein] + ATP = O-phospho-L-seryl-[protein] + ADP + H(+). The catalysed reaction is L-threonyl-[protein] + ATP = O-phospho-L-threonyl-[protein] + ADP + H(+). With respect to regulation, activated by calcium. Upon calcium binding to the EF-hand domains, the C-terminus of the junction domain (J domain) undergoes a conformational change which results in the dissociation of the pseudo-substrate inhibitory motif from the catalytic domain. This, in turn may facilitate the autophosphorylation of the activation loop at Thr-230, which leads to the kinase activation. Its function is as follows. Calcium-dependent protein kinase which acts as a sensor and effector of intracellular Ca(2+) levels probably in part downstream of cGMP-activated PKG kinase. During the liver stage, involved in sporozoite motility and thus in sporozoite invasion of host hepatocytes, probably together with CDPK4 and CDPK5. In the mosquito midgut and during the last stage of male gamete exflagellation, may play a role in the rupture of the host erythrocyte membrane. In the mosquito midgut, required for the differentiation of the zygote into the ookinete by promoting the translational activation of a subset of repressed mRNAs; these mRNAs are kept repressed in the zygote by the DOZI- or CITH-containing mRNP complexes. Dispensable during the asexual blood stage. This chain is Calcium-dependent protein kinase 1, found in Plasmodium yoelii yoelii.